The primary structure comprises 249 residues: Cobalt transport protein CbiM (249 aa).

Positions 1-27 (MKPLHRWLPVVIGAALLIIFESRAAYA) are cleaved as a signal peptide. The next 6 helical transmembrane spans lie at 33-53 (GFLP…FWVL), 70-90 (LLLG…IPSV), 102-122 (LGTI…VLLF), 134-154 (TLGA…WLIW), 161-181 (APIW…TYVV), and 207-227 (IFAV…VLIF).

It belongs to the CbiM family. As to quaternary structure, forms an energy-coupling factor (ECF) transporter complex composed of an ATP-binding protein (A component, CbiO), a transmembrane protein (T component, CbiQ) and 2 possible substrate-capture proteins (S components, CbiM and CbiN) of unknown stoichimetry.

The protein localises to the cell membrane. It participates in cofactor biosynthesis; adenosylcobalamin biosynthesis. Functionally, part of the energy-coupling factor (ECF) transporter complex CbiMNOQ involved in cobalt import. The polypeptide is Cobalt transport protein CbiM (Roseiflexus sp. (strain RS-1)).